The primary structure comprises 123 residues: Large ribosomal subunit protein bL20 (123 aa).

Belongs to the bacterial ribosomal protein bL20 family.

Binds directly to 23S ribosomal RNA and is necessary for the in vitro assembly process of the 50S ribosomal subunit. It is not involved in the protein synthesizing functions of that subunit. In Ehrlichia ruminantium (strain Gardel), this protein is Large ribosomal subunit protein bL20.